Consider the following 596-residue polypeptide: Nuclear receptor subfamily 2 group C member 2 (596 aa).

Ser19 bears the Phosphoserine; by MAPK mark. The residue at position 46 (Ser46) is a Phosphoserine. 2 positions are modified to phosphoserine; by MAPK: Ser55 and Ser68. Phosphoserine is present on Ser98. The nuclear receptor DNA-binding region spans 114 to 189 (VEYCVVCGDK…MGMKMESVQS (76 aa)). 2 consecutive NR C4-type zinc fingers follow at residues 117–137 (CVVCGDKASGRHYGAVSCEGC) and 153–177 (CRSNQDCIINKHHRNRCQFCRLKKC). Residue Lys192 forms a Glycyl lysine isopeptide (Lys-Gly) (interchain with G-Cter in SUMO2) linkage. Ser219 carries the post-translational modification Phosphoserine. Lys231 carries the post-translational modification N6-acetyllysine. The NR LBD domain occupies 341–583 (GSIHVISRDQ…SIIPYILKME (243 aa)).

This sequence belongs to the nuclear hormone receptor family. NR2 subfamily. Homodimer; can bind DNA as homodimer. Heterodimer; binds DNA as a heterodimer with NR2C1 required for chromatin remodeling and for binding to promoter regions such as globin DR1 repeats. Interacts with PCAF; the interaction preferentially occurs on the non-phosphorylated form and induces NR2C2-mediated transactivation activity and does not require the ligand-binding domain. Interacts (MAPK-mediated phosphorylated form) with NRIP1; the interaction promotes repression of NR2C2-mediated activity. Interacts with NR2C2AP; the interaction represses selective NR2C2-mediated transcriptional activity. Interacts with NLRP10. Interacts (via ligand-binding region) with transcriptional corepressor JAZF1; the interaction promotes NR2C2-mediated transcriptional repression. In terms of processing, phosphorylation on Ser-19 and Ser-68 is an important regulator of NR2C2-mediated transcriptional activity. Phosphorylation on these residues recruits the corepressor, NRIP1, leading to transcripional repression, whereas the non-phosphorylated form preferentially recruits the coactivator, PCAF.

It localises to the nucleus. In terms of biological role, orphan nuclear receptor that can act as a repressor or activator of transcription. An important repressor of nuclear receptor signaling pathways such as retinoic acid receptor, retinoid X, vitamin D3 receptor, thyroid hormone receptor and estrogen receptor pathways. May regulate gene expression during the late phase of spermatogenesis. Together with NR2C1, forms the core of the DRED (direct repeat erythroid-definitive) complex that represses embryonic and fetal globin transcription including that of GATA1. Binds to hormone response elements (HREs) consisting of two 5'-AGGTCA-3' half site direct repeat consensus sequences. Plays a fundamental role in early embryonic development and embryonic stem cells. Required for normal spermatogenesis and cerebellum development. Appears to be important for neurodevelopmentally regulated behavior. Activates transcriptional activity of LHCG. Antagonist of PPARA-mediated transactivation. The sequence is that of Nuclear receptor subfamily 2 group C member 2 (NR2C2) from Homo sapiens (Human).